The sequence spans 1281 residues: Zinc finger transcription factor Trps1 (1281 aa).

2 disordered regions span residues 1-101 and 116-204; these read MVRK…VSFP and PAAG…KGDL. 2 stretches are compositionally biased toward polar residues: residues 21-31 and 40-49; these read LEPTATESKVS and DQMSENTDQS. A Glycyl lysine isopeptide (Lys-Gly) (interchain with G-Cter in SUMO2) cross-link involves residue Lys-29. Phosphoserine occurs at positions 90 and 127. The span at 148–162 shows a compositional bias: basic and acidic residues; sequence LETKEEHKMSPKATE. Positions 166-189 are enriched in polar residues; it reads PVQSGQANCQGLSPVSVASKNPQV. A phosphoserine mark is found at Ser-178 and Ser-216. The C2H2-type 1; atypical zinc-finger motif lies at 222–247; the sequence is FKCNICGYGYYGNDPTDLIKHFRKYH. Residue Lys-263 forms a Glycyl lysine isopeptide (Lys-Gly) (interchain with G-Cter in SUMO2) linkage. The C2H2-type 2; atypical zinc-finger motif lies at 333–358; that stretch reads FRCKFCNFTYMGNSSTELEQHFLQTH. The tract at residues 365-393 is disordered; it reads SLPSSEGVKPSEKNSNKSIPALRASDSGD. Residues Lys-418, Lys-457, Lys-474, and Lys-488 each participate in a glycyl lysine isopeptide (Lys-Gly) (interchain with G-Cter in SUMO2) cross-link. A disordered region spans residues 484–515; it reads NDLAKSVEGEPLTKPEKGLSGAKKKDFPSKGA. Residues 488-515 show a composition bias toward basic and acidic residues; that stretch reads KSVEGEPLTKPEKGLSGAKKKDFPSKGA. The C2H2-type 3; atypical zinc-finger motif lies at 614-637; that stretch reads HQCHQCSFSTPDVDVLLFHYETVH. The interval 635-819 is mediates interaction with GLI3; sequence TVHESQASDV…SLGLLTPVSS (185 aa). A Glycyl lysine isopeptide (Lys-Gly) (interchain with G-Cter in SUMO2) cross-link involves residue Lys-645. C2H2-type zinc fingers lie at residues 666 to 689 and 692 to 715; these read HSCTKCDFITQVEEEISRHYRRAH and YKCRQCSFTAADTQSLLEHFNTVH. Residues Lys-737 and Lys-755 each participate in a glycyl lysine isopeptide (Lys-Gly) (interchain with G-Cter in SUMO2) cross-link. Lys-766 is covalently cross-linked (Glycyl lysine isopeptide (Lys-Gly) (interchain with G-Cter in SUMO1); alternate). Lys-766 participates in a covalent cross-link: Glycyl lysine isopeptide (Lys-Gly) (interchain with G-Cter in SUMO2); alternate. Residues Lys-825 and Lys-850 each participate in a glycyl lysine isopeptide (Lys-Gly) (interchain with G-Cter in SUMO2) cross-link. Residues 856-885 form a disordered region; it reads APAGSEKSASLTQQYPASGESKTKDESQSL. The span at 862–871 shows a compositional bias: polar residues; that stretch reads KSASLTQQYP. Residues Lys-877 and Lys-879 each participate in a glycyl lysine isopeptide (Lys-Gly) (interchain with G-Cter in SUMO2) cross-link. The GATA-type zinc-finger motif lies at 896–920; that stretch reads CANCLTTKTSLWRKNANGGYVCNAC. Glycyl lysine isopeptide (Lys-Gly) (interchain with G-Cter in SUMO2) cross-links involve residues Lys-925, Lys-937, and Lys-965. Over residues 961–977 the composition is skewed to polar residues; the sequence is EQLNKQQRGSGEEQVNG. Residues 961–1000 are disordered; it reads EQLNKQQRGSGEEQVNGSPLERRSEDHLSESHPREIPLPS. Ser-978 carries the phosphoserine modification. Residues 980-995 are compositionally biased toward basic and acidic residues; that stretch reads LERRSEDHLSESHPRE. Residues 985 to 1184 form a mediates interaction with RNF4 region; the sequence is EDHLSESHPR…PTANGASKEK (200 aa). Glycyl lysine isopeptide (Lys-Gly) (interchain with G-Cter in SUMO2) cross-links involve residues Lys-1003, Lys-1012, Lys-1030, and Lys-1040. Residues 1040 to 1049 show a composition bias toward polar residues; sequence KSPQESTGDP. Residues 1040-1078 are disordered; sequence KSPQESTGDPGNSSSVSDGKGSSERGSPIEKYMRPAKHP. At Ser-1041 the chain carries Phosphoserine. Residues 1050–1059 are compositionally biased toward low complexity; sequence GNSSSVSDGK. Over residues 1060–1072 the composition is skewed to basic and acidic residues; it reads GSSERGSPIEKYM. Ser-1066 carries the phosphoserine modification. Lys-1070 is covalently cross-linked (Glycyl lysine isopeptide (Lys-Gly) (interchain with G-Cter in SUMO2)). Ser-1085 carries the phosphoserine modification. The tract at residues 1163 to 1281 is transcriptional repressor domain; sequence PLDLAIKHSR…QAEKNGKPKE (119 aa). Residues 1169–1195 form a disordered region; sequence KHSRPGPTANGASKEKTKAPPTVKNED. Glycyl lysine isopeptide (Lys-Gly) (interchain with G-Cter in SUMO2); alternate cross-links involve residues Lys-1192 and Lys-1201. Glycyl lysine isopeptide (Lys-Gly) (interchain with G-Cter in SUMO); alternate cross-links involve residues Lys-1192 and Lys-1201. Residue Lys-1201 forms a Glycyl lysine isopeptide (Lys-Gly) (interchain with G-Cter in SUMO1); alternate linkage. 2 C2H2-type zinc fingers span residues 1215–1237 and 1243–1267; these read TKCVHCGIVFLDEVMYALHMSCH and FQCSICQHLCTDKYDFTTHIQRGLH.

In terms of assembly, interacts with RNF4; regulates TRPS1 repressor activity. Interacts specifically with the activator form of GLI3 (GLI3A) but not with the repressor form (GLI3R). Post-translationally, sumoylated. Sumoylation in the repressor domain inhibits the transcription repression activity. Sumoylation on Lys-1201 is the major site. Appears to be sumoylated on multiple sites. As to expression, in the embryo, expression is detected in both visceral and skeletal tissues. Found in the maxilla, mandible, snout, prospective phalanges and in the femoral head within the developing hip. Also expressed in the hair follicles.

It localises to the nucleus. Functionally, transcriptional repressor. Binds specifically to GATA sequences and represses expression of GATA-regulated genes at selected sites and stages in vertebrate development. Regulates chondrocyte proliferation and differentiation. Executes multiple functions in proliferating chondrocytes, expanding the region of distal chondrocytes, activating proliferation in columnar cells and supporting the differentiation of columnar into hypertrophic chondrocytes. The polypeptide is Zinc finger transcription factor Trps1 (Trps1) (Mus musculus (Mouse)).